Reading from the N-terminus, the 79-residue chain is Large ribosomal subunit protein uL24 (79 aa).

Belongs to the universal ribosomal protein uL24 family. As to quaternary structure, part of the 50S ribosomal subunit.

Functionally, one of two assembly initiator proteins, it binds directly to the 5'-end of the 23S rRNA, where it nucleates assembly of the 50S subunit. In terms of biological role, one of the proteins that surrounds the polypeptide exit tunnel on the outside of the subunit. This chain is Large ribosomal subunit protein uL24, found in Lactobacillus johnsonii (strain CNCM I-12250 / La1 / NCC 533).